Here is a 147-residue protein sequence, read N- to C-terminus: Hemoglobin subunit beta (147 aa).

Residues 2-147 (DWTDAERAAI…VVSALGRQYH (146 aa)) form the Globin domain. Positions 63 and 92 each coordinate heme b.

Belongs to the globin family. Heterotetramer of two alpha chains and two beta chains. Red blood cells.

In terms of biological role, involved in oxygen transport from gills to the various peripheral tissues. This Leiostomus xanthurus (Spot) protein is Hemoglobin subunit beta (hbb).